The following is a 121-amino-acid chain: Ribonuclease P protein component (121 aa).

It belongs to the RnpA family. Consists of a catalytic RNA component (M1 or rnpB) and a protein subunit.

The enzyme catalyses Endonucleolytic cleavage of RNA, removing 5'-extranucleotides from tRNA precursor.. RNaseP catalyzes the removal of the 5'-leader sequence from pre-tRNA to produce the mature 5'-terminus. It can also cleave other RNA substrates such as 4.5S RNA. The protein component plays an auxiliary but essential role in vivo by binding to the 5'-leader sequence and broadening the substrate specificity of the ribozyme. This is Ribonuclease P protein component from Rickettsia prowazekii (strain Madrid E).